We begin with the raw amino-acid sequence, 182 residues long: Adenylate kinase (182 aa).

12 to 17 (GAGKGT) serves as a coordination point for ATP. The segment at 32–61 (STGDLLRDEVSSGSVLGIKAAEIMNKGELV) is NMP. AMP-binding positions include Thr-33, Arg-38, 59-61 (ELV), 85-88 (GFPR), and Gln-92. The LID stretch occupies residues 126–132 (ERGRQDD). Arg-127 is a binding site for ATP. Arg-129 and Arg-140 together coordinate AMP. ATP is bound at residue Ala-168.

This sequence belongs to the adenylate kinase family. In terms of assembly, monomer.

It is found in the cytoplasm. The catalysed reaction is AMP + ATP = 2 ADP. The protein operates within purine metabolism; AMP biosynthesis via salvage pathway; AMP from ADP: step 1/1. In terms of biological role, catalyzes the reversible transfer of the terminal phosphate group between ATP and AMP. Plays an important role in cellular energy homeostasis and in adenine nucleotide metabolism. In Prochlorococcus marinus (strain NATL2A), this protein is Adenylate kinase.